A 144-amino-acid chain; its full sequence is Prefoldin subunit alpha (144 aa).

This sequence belongs to the prefoldin subunit alpha family. As to quaternary structure, heterohexamer of two alpha and four beta subunits.

It is found in the cytoplasm. Functionally, molecular chaperone capable of stabilizing a range of proteins. Seems to fulfill an ATP-independent, HSP70-like function in archaeal de novo protein folding. In Methanosarcina barkeri (strain Fusaro / DSM 804), this protein is Prefoldin subunit alpha.